The chain runs to 167 residues: 2-C-methyl-D-erythritol 2,4-cyclodiphosphate synthase (167 aa).

Residues Asp-10 and His-12 each contribute to the a divalent metal cation site. 4-CDP-2-C-methyl-D-erythritol 2-phosphate contacts are provided by residues 10 to 12 and 36 to 37; these read DVH and HS. An a divalent metal cation-binding site is contributed by His-44. 4-CDP-2-C-methyl-D-erythritol 2-phosphate-binding positions include 58-60, 63-67, 134-137, Phe-141, and Arg-144; these read NIG, FPNTN, and TTSE.

Belongs to the IspF family. As to quaternary structure, homotrimer. A divalent metal cation serves as cofactor.

The catalysed reaction is 4-CDP-2-C-methyl-D-erythritol 2-phosphate = 2-C-methyl-D-erythritol 2,4-cyclic diphosphate + CMP. The protein operates within isoprenoid biosynthesis; isopentenyl diphosphate biosynthesis via DXP pathway; isopentenyl diphosphate from 1-deoxy-D-xylulose 5-phosphate: step 4/6. Its function is as follows. Involved in the biosynthesis of isopentenyl diphosphate (IPP) and dimethylallyl diphosphate (DMAPP), two major building blocks of isoprenoid compounds. Catalyzes the conversion of 4-diphosphocytidyl-2-C-methyl-D-erythritol 2-phosphate (CDP-ME2P) to 2-C-methyl-D-erythritol 2,4-cyclodiphosphate (ME-CPP) with a corresponding release of cytidine 5-monophosphate (CMP). The sequence is that of 2-C-methyl-D-erythritol 2,4-cyclodiphosphate synthase from Azobacteroides pseudotrichonymphae genomovar. CFP2.